Consider the following 365-residue polypeptide: Succinyl-diaminopimelate desuccinylase (365 aa).

Residue histidine 64 coordinates Zn(2+). The active site involves aspartate 66. A Zn(2+)-binding site is contributed by aspartate 95. The active-site Proton acceptor is the glutamate 125. Positions 126, 154, and 339 each coordinate Zn(2+).

The protein belongs to the peptidase M20A family. DapE subfamily. Homodimer. Requires Zn(2+) as cofactor. The cofactor is Co(2+).

It carries out the reaction N-succinyl-(2S,6S)-2,6-diaminopimelate + H2O = (2S,6S)-2,6-diaminopimelate + succinate. It functions in the pathway amino-acid biosynthesis; L-lysine biosynthesis via DAP pathway; LL-2,6-diaminopimelate from (S)-tetrahydrodipicolinate (succinylase route): step 3/3. Catalyzes the hydrolysis of N-succinyl-L,L-diaminopimelic acid (SDAP), forming succinate and LL-2,6-diaminopimelate (DAP), an intermediate involved in the bacterial biosynthesis of lysine and meso-diaminopimelic acid, an essential component of bacterial cell walls. This Sulfurimonas denitrificans (strain ATCC 33889 / DSM 1251) (Thiomicrospira denitrificans (strain ATCC 33889 / DSM 1251)) protein is Succinyl-diaminopimelate desuccinylase.